The primary structure comprises 231 residues: Cytochrome c oxidase subunit 2 (231 aa).

Topologically, residues 1 to 30 are mitochondrial intermembrane; it reads MNNFFQGYNLLFQHSLFASYMDWFHSFNCS. Residues 31–52 form a helical membrane-spanning segment; the sequence is LLLGVLVFVTLLFGYLIFGTFY. Residues 53-69 lie on the Mitochondrial matrix side of the membrane; the sequence is FKSKKIEYQFGELLCSI. Residues 70 to 89 form a helical membrane-spanning segment; it reads FPTIILLMQMVPSLSLLYYY. Topologically, residues 90-231 are mitochondrial intermembrane; sequence GLMNLDSNLT…FKSWCFGTME (142 aa). 6 residues coordinate Cu cation: His-164, Cys-199, Glu-201, Cys-203, His-207, and Met-210. A Mg(2+)-binding site is contributed by Glu-201.

The protein belongs to the cytochrome c oxidase subunit 2 family. As to quaternary structure, component of the cytochrome c oxidase (complex IV, CIV), a multisubunit enzyme composed of a catalytic core of 3 subunits and several supernumerary subunits. The complex exists as a monomer or a dimer and forms supercomplexes (SCs) in the inner mitochondrial membrane with ubiquinol-cytochrome c oxidoreductase (cytochrome b-c1 complex, complex III, CIII). Requires Cu cation as cofactor.

It localises to the mitochondrion inner membrane. It catalyses the reaction 4 Fe(II)-[cytochrome c] + O2 + 8 H(+)(in) = 4 Fe(III)-[cytochrome c] + 2 H2O + 4 H(+)(out). Component of the cytochrome c oxidase, the last enzyme in the mitochondrial electron transport chain which drives oxidative phosphorylation. The respiratory chain contains 3 multisubunit complexes succinate dehydrogenase (complex II, CII), ubiquinol-cytochrome c oxidoreductase (cytochrome b-c1 complex, complex III, CIII) and cytochrome c oxidase (complex IV, CIV), that cooperate to transfer electrons derived from NADH and succinate to molecular oxygen, creating an electrochemical gradient over the inner membrane that drives transmembrane transport and the ATP synthase. Cytochrome c oxidase is the component of the respiratory chain that catalyzes the reduction of oxygen to water. Electrons originating from reduced cytochrome c in the intermembrane space (IMS) are transferred via the dinuclear copper A center (CU(A)) of subunit 2 and heme A of subunit 1 to the active site in subunit 1, a binuclear center (BNC) formed by heme A3 and copper B (CU(B)). The BNC reduces molecular oxygen to 2 water molecules using 4 electrons from cytochrome c in the IMS and 4 protons from the mitochondrial matrix. This chain is Cytochrome c oxidase subunit 2, found in Caenorhabditis elegans.